We begin with the raw amino-acid sequence, 162 residues long: MAAAAASTKIVAVVVAVLLAILEMPSCAVARRHHHDHHDKPGHHDGGFPAVMTVNGFEKGEDGGGPAACDGHYHSDGELIVALSTEWFAGGRRCHRRIRITPSEHGRRGGGGGRRAVEATVVDECDSRRGCKDDVVDSSPAVWRALGLDTDSGEVRVTWSDV.

The first 30 residues, 1 to 30 (MAAAAASTKIVAVVVAVLLAILEMPSCAVA), serve as a signal peptide directing secretion.

This sequence belongs to the kiwellin family.

It localises to the secreted. This chain is Putative ripening-related protein 7, found in Oryza sativa subsp. japonica (Rice).